We begin with the raw amino-acid sequence, 347 residues long: NADH-ubiquinone oxidoreductase chain 2 (347 aa).

The next 11 helical transmembrane spans lie at 1–21 (MNPA…MIVT), 25–45 (HWLT…PILM), 59–79 (YFLT…INLV), 96–116 (ITMT…FWVP), 127–147 (GLIL…QISP), 149–169 (INLE…GWGG), 178–198 (IMAY…AYNP), 201–221 (TLLN…MLML), 240–260 (LATT…LSGF), 274–294 (DSII…YFYM), and 326–346 (ISPL…LTLL).

Belongs to the complex I subunit 2 family. Core subunit of respiratory chain NADH dehydrogenase (Complex I) which is composed of 45 different subunits. Interacts with TMEM242.

The protein resides in the mitochondrion inner membrane. The catalysed reaction is a ubiquinone + NADH + 5 H(+)(in) = a ubiquinol + NAD(+) + 4 H(+)(out). Functionally, core subunit of the mitochondrial membrane respiratory chain NADH dehydrogenase (Complex I) which catalyzes electron transfer from NADH through the respiratory chain, using ubiquinone as an electron acceptor. Essential for the catalytic activity and assembly of complex I. The sequence is that of NADH-ubiquinone oxidoreductase chain 2 from Dobsonia minor (Lesser bare-backed fruit bat).